Here is an 894-residue protein sequence, read N- to C-terminus: Microsomal triglyceride transfer protein large subunit (894 aa).

The N-terminal stretch at 1–18 is a signal peptide; sequence MILLAVLFLCFISSYSAS. One can recognise a Vitellogenin domain in the interval 28–659; the sequence is LNNDRLYKLT…IFQYIGKAGL (632 aa). A disulfide bridge connects residues cysteine 174 and cysteine 194.

Heterodimer; heterodimerizes with the protein disulfide isomerase (P4HB/PDI). Interacts with APOB. Interacts with PRAP1. Liver and small intestine. Also found in ovary, testis and kidney.

It is found in the endoplasmic reticulum. It localises to the golgi apparatus. It carries out the reaction a 1,2-diacyl-sn-glycero-3-phosphocholine(in) = a 1,2-diacyl-sn-glycero-3-phosphocholine(out). The enzyme catalyses a 1,2-diacyl-sn-glycero-3-phosphoethanolamine(in) = a 1,2-diacyl-sn-glycero-3-phosphoethanolamine(out). The catalysed reaction is a cholesterol ester(in) = a cholesterol ester(out). It catalyses the reaction a triacyl-sn-glycerol(in) = a triacyl-sn-glycerol(out). In terms of biological role, catalyzes the transport of triglyceride, cholesteryl ester, and phospholipid between phospholipid surfaces. Required for the assembly and secretion of plasma lipoproteins that contain apolipoprotein B. May be involved in regulating cholesteryl ester biosynthesis in cells that produce lipoproteins. The chain is Microsomal triglyceride transfer protein large subunit (MTTP) from Homo sapiens (Human).